The primary structure comprises 419 residues: Serine hydroxymethyltransferase (419 aa).

Residues leucine 118 and glycine 122 to leucine 124 contribute to the (6S)-5,6,7,8-tetrahydrofolate site. The residue at position 227 (lysine 227) is an N6-(pyridoxal phosphate)lysine.

This sequence belongs to the SHMT family. In terms of assembly, homodimer. Requires pyridoxal 5'-phosphate as cofactor.

Its subcellular location is the cytoplasm. The catalysed reaction is (6R)-5,10-methylene-5,6,7,8-tetrahydrofolate + glycine + H2O = (6S)-5,6,7,8-tetrahydrofolate + L-serine. It functions in the pathway one-carbon metabolism; tetrahydrofolate interconversion. It participates in amino-acid biosynthesis; glycine biosynthesis; glycine from L-serine: step 1/1. Catalyzes the reversible interconversion of serine and glycine with tetrahydrofolate (THF) serving as the one-carbon carrier. This reaction serves as the major source of one-carbon groups required for the biosynthesis of purines, thymidylate, methionine, and other important biomolecules. Also exhibits THF-independent aldolase activity toward beta-hydroxyamino acids, producing glycine and aldehydes, via a retro-aldol mechanism. In Chloroflexus aurantiacus (strain ATCC 29364 / DSM 637 / Y-400-fl), this protein is Serine hydroxymethyltransferase.